The following is a 211-amino-acid chain: Ribosomal RNA small subunit methyltransferase G (211 aa).

Residues Gly-72, Phe-77, Ile-125–Glu-126, and Arg-141 each bind S-adenosyl-L-methionine.

This sequence belongs to the methyltransferase superfamily. RNA methyltransferase RsmG family.

The protein resides in the cytoplasm. The enzyme catalyses guanosine(527) in 16S rRNA + S-adenosyl-L-methionine = N(7)-methylguanosine(527) in 16S rRNA + S-adenosyl-L-homocysteine. Specifically methylates the N7 position of guanine in position 527 of 16S rRNA. The chain is Ribosomal RNA small subunit methyltransferase G from Allorhizobium ampelinum (strain ATCC BAA-846 / DSM 112012 / S4) (Agrobacterium vitis (strain S4)).